The sequence spans 331 residues: 4-hydroxythreonine-4-phosphate dehydrogenase (331 aa).

The substrate site is built by His-137 and Thr-138. The a divalent metal cation site is built by His-167, His-212, and His-267. Substrate-binding residues include Lys-275, Asn-284, and Arg-293.

This sequence belongs to the PdxA family. Homodimer. Zn(2+) is required as a cofactor. Requires Mg(2+) as cofactor. Co(2+) serves as cofactor.

The protein resides in the cytoplasm. The catalysed reaction is 4-(phosphooxy)-L-threonine + NAD(+) = 3-amino-2-oxopropyl phosphate + CO2 + NADH. It participates in cofactor biosynthesis; pyridoxine 5'-phosphate biosynthesis; pyridoxine 5'-phosphate from D-erythrose 4-phosphate: step 4/5. Its function is as follows. Catalyzes the NAD(P)-dependent oxidation of 4-(phosphooxy)-L-threonine (HTP) into 2-amino-3-oxo-4-(phosphooxy)butyric acid which spontaneously decarboxylates to form 3-amino-2-oxopropyl phosphate (AHAP). The chain is 4-hydroxythreonine-4-phosphate dehydrogenase from Yersinia pestis bv. Antiqua (strain Angola).